Reading from the N-terminus, the 124-residue chain is UPF0231 protein Sbal223_3655 (124 aa).

The protein belongs to the UPF0231 family.

The chain is UPF0231 protein Sbal223_3655 from Shewanella baltica (strain OS223).